Here is a 469-residue protein sequence, read N- to C-terminus: Probable monogalactosyldiacylglycerol synthase 2, chloroplastic (469 aa).

The transit peptide at 1 to 42 directs the protein to the chloroplast; it reads MVISVATPRRSIRDAVLGGVLGAGGRQLYQPLRCAFYDGAAG.

This sequence belongs to the glycosyltransferase 28 family.

Its subcellular location is the plastid. The protein localises to the chloroplast membrane. The enzyme catalyses a 1,2-diacyl-sn-glycerol + UDP-alpha-D-galactose = a 1,2-diacyl-3-O-(beta-D-galactosyl)-sn-glycerol + UDP + H(+). Functionally, involved in the synthesis of the major structural component of photosynthetic membranes. This chain is Probable monogalactosyldiacylglycerol synthase 2, chloroplastic (MGD2), found in Oryza sativa subsp. japonica (Rice).